Reading from the N-terminus, the 141-residue chain is Large ribosomal subunit protein uL11 (141 aa).

The protein belongs to the universal ribosomal protein uL11 family. Part of the ribosomal stalk of the 50S ribosomal subunit. Interacts with L10 and the large rRNA to form the base of the stalk. L10 forms an elongated spine to which L12 dimers bind in a sequential fashion forming a multimeric L10(L12)X complex. In terms of processing, one or more lysine residues are methylated.

Forms part of the ribosomal stalk which helps the ribosome interact with GTP-bound translation factors. The chain is Large ribosomal subunit protein uL11 from Streptococcus pyogenes serotype M1.